Reading from the N-terminus, the 435-residue chain is CBL-interacting protein kinase 28 (435 aa).

The Protein kinase domain occupies 11–265; sequence YVIGRQLGQG…ISRIKRSAWY (255 aa). ATP-binding positions include 17–25 and Lys40; that span reads LGQGTFGKV. Asp133 (proton acceptor) is an active-site residue. The activation loop stretch occupies residues 151–180; that stretch reads DFGLSALAESRRQDGLLHTACGTPAYVAPE. In terms of domain architecture, NAF spans 283 to 329; it reads CTSEAPFSGPTICISSERNQEPPNLHNLNAFDIISLSTGFDLSGLFG. The tract at residues 334–363 is PPI; the sequence is RRESLFTSRKPAAAVLVKLKELAKALNLKV.

Belongs to the protein kinase superfamily. CAMK Ser/Thr protein kinase family. SNF1 subfamily. Mn(2+) is required as a cofactor.

It catalyses the reaction L-seryl-[protein] + ATP = O-phospho-L-seryl-[protein] + ADP + H(+). The catalysed reaction is L-threonyl-[protein] + ATP = O-phospho-L-threonyl-[protein] + ADP + H(+). CIPK serine-threonine protein kinases interact with CBL proteins. Binding of a CBL protein to the regulatory NAF domain of CIPK protein lead to the activation of the kinase in a calcium-dependent manner. In Oryza sativa subsp. japonica (Rice), this protein is CBL-interacting protein kinase 28 (CIPK28).